We begin with the raw amino-acid sequence, 109 residues long: Putative double-stranded DNA mimic protein YciU (109 aa).

The protein belongs to the putative dsDNA mimic protein family.

Its function is as follows. May act as a double-stranded DNA (dsDNA) mimic. Probably regulates the activity of a dsDNA-binding protein. In Salmonella paratyphi B (strain ATCC BAA-1250 / SPB7), this protein is Putative double-stranded DNA mimic protein YciU.